Consider the following 138-residue polypeptide: Host cell factor C1 regulator 1 (138 aa).

Residues 76 to 79 (DHPY) form an interaction with HCFC1 region. The Nuclear export signal signature appears at 110–119 (IPEALRLLRL).

In terms of assembly, interacts with HCFC1. Widely expressed.

It is found in the cytoplasm. It localises to the nucleus. In terms of biological role, regulates HCFC1 activity by modulating its subcellular localization. Overexpression of HCFC1R1 leads to accumulation of HCFC1 in the cytoplasm. HCFC1R1-mediated export may provide the pool of cytoplasmic HCFC1 required for import of virion-derived VP16 into the nucleus. In Homo sapiens (Human), this protein is Host cell factor C1 regulator 1 (HCFC1R1).